An 833-amino-acid chain; its full sequence is Protein translocase subunit SecA (833 aa).

Residues Gln87, 105 to 109, and Asp494 each bind ATP; that span reads GEGKT. The tract at residues 789 to 816 is disordered; the sequence is PAAVAYSGGEAEAGPAQPHREDPKVGRN. Positions 806-815 are enriched in basic and acidic residues; that stretch reads PHREDPKVGR. Cys819, Cys821, Cys830, and Cys831 together coordinate Zn(2+).

This sequence belongs to the SecA family. In terms of assembly, monomer and homodimer. Part of the essential Sec protein translocation apparatus which comprises SecA, SecYEG and auxiliary proteins SecDF-YajC and YidC. The cofactor is Zn(2+).

It localises to the cell inner membrane. The protein resides in the cytoplasm. The enzyme catalyses ATP + H2O + cellular proteinSide 1 = ADP + phosphate + cellular proteinSide 2.. Its function is as follows. Part of the Sec protein translocase complex. Interacts with the SecYEG preprotein conducting channel. Has a central role in coupling the hydrolysis of ATP to the transfer of proteins into and across the cell membrane, serving as an ATP-driven molecular motor driving the stepwise translocation of polypeptide chains across the membrane. This chain is Protein translocase subunit SecA, found in Nitratidesulfovibrio vulgaris (strain ATCC 29579 / DSM 644 / CCUG 34227 / NCIMB 8303 / VKM B-1760 / Hildenborough) (Desulfovibrio vulgaris).